The sequence spans 328 residues: Tetraacyldisaccharide 4'-kinase (328 aa).

An ATP-binding site is contributed by T55 to T62.

This sequence belongs to the LpxK family.

The enzyme catalyses a lipid A disaccharide + ATP = a lipid IVA + ADP + H(+). Its pathway is glycolipid biosynthesis; lipid IV(A) biosynthesis; lipid IV(A) from (3R)-3-hydroxytetradecanoyl-[acyl-carrier-protein] and UDP-N-acetyl-alpha-D-glucosamine: step 6/6. Transfers the gamma-phosphate of ATP to the 4'-position of a tetraacyldisaccharide 1-phosphate intermediate (termed DS-1-P) to form tetraacyldisaccharide 1,4'-bis-phosphate (lipid IVA). In Escherichia coli O157:H7, this protein is Tetraacyldisaccharide 4'-kinase.